We begin with the raw amino-acid sequence, 124 residues long: Small ribosomal subunit protein uS12 (124 aa).

D90 is subject to 3-methylthioaspartic acid.

Belongs to the universal ribosomal protein uS12 family. In terms of assembly, part of the 30S ribosomal subunit. Contacts proteins S8 and S17. May interact with IF1 in the 30S initiation complex.

Functionally, with S4 and S5 plays an important role in translational accuracy. In terms of biological role, interacts with and stabilizes bases of the 16S rRNA that are involved in tRNA selection in the A site and with the mRNA backbone. Located at the interface of the 30S and 50S subunits, it traverses the body of the 30S subunit contacting proteins on the other side and probably holding the rRNA structure together. The combined cluster of proteins S8, S12 and S17 appears to hold together the shoulder and platform of the 30S subunit. This is Small ribosomal subunit protein uS12 from Wolbachia pipientis subsp. Culex pipiens (strain wPip).